A 251-amino-acid chain; its full sequence is MAASLQSANPTLSRTLASPNKPSSFATFRSPFLRFNSTSVASNFKPLVSREASSSFVTRSAAEPQERKTFHGLCYVVGDNIDTDQIIPAEFLTLVPSNPEEYEKLGSYALVGLPASYKERFVQPGEMKTKYSIIIGGENFGCGSSREHAPVCLGAAGAKAVVAQSYARIFFRNSVATGEVYPLDSEVRVCDECTTGDVATVELREGDSILINHTTGKEYKLKPIGDAGPVIDAGGIFAYARKAGMIPSAAA.

Residues 1-59 (MAASLQSANPTLSRTLASPNKPSSFATFRSPFLRFNSTSVASNFKPLVSREASSSFVTR) constitute a chloroplast transit peptide.

Belongs to the LeuD family. As to quaternary structure, heterodimer of the large LEUC/IIL1 subunit and the small LEUD (SSU1, SSU2 or SSU3) subunits. As to expression, expressed at low levels in roots, root tips, at the basis of the hypocotyls, and in emerging leaves. In young seedlings, expressed in cotyledon epidermal cells. In hypocotyls, expressed in peripheral cells. In seedling roots, expressed in the epidermis, including root hairs, and throughout the cortex. In rosette leaves, expressed in the upper and lower epidermis. In roots of adult plants, expressed in the root tips and cortex of the mature root enclosing the stele. In flowering stalks, expressed in the epidermis. Expressed in the carpel epidermis.

The protein resides in the plastid. The protein localises to the chloroplast stroma. It catalyses the reaction (2R,3S)-3-isopropylmalate = (2S)-2-isopropylmalate. It participates in amino-acid biosynthesis; L-leucine biosynthesis; L-leucine from 3-methyl-2-oxobutanoate: step 2/4. In terms of biological role, catalyzes the isomerization between 2-isopropylmalate and 3-isopropylmalate, via the formation of 2-isopropylmaleate. Plays an essential role in leucine biosynthesis. Functions in both the biosynthesis of leucine, and in the methionine chain elongation pathway of aliphatic glucosinolate formation. Plays an essential role in female gametophyte development. The sequence is that of 3-isopropylmalate dehydratase small subunit 1 from Arabidopsis thaliana (Mouse-ear cress).